The primary structure comprises 481 residues: Rhamnogalacturonan I rhamnosyltransferase 4 (481 aa).

Residues 33–55 form a helical; Signal-anchor for type II membrane protein membrane-spanning segment; sequence VWFFRVCSCILVWTCLIQLFWHS. N85 and N118 each carry an N-linked (GlcNAc...) asparagine glycan. 258 to 260 is a substrate binding site; that stretch reads HLR. 2 N-linked (GlcNAc...) asparagine glycosylation sites follow: N372 and N432.

It belongs to the glycosyltransferase GT106 family.

The protein localises to the golgi apparatus membrane. It carries out the reaction alpha-D-galacturonosyl-[(1-&gt;2)-alpha-L-rhamnosyl-(1-&gt;4)-alpha-D-galacturonosyl](n) + UDP-beta-L-rhamnose = [(1-&gt;2)-alpha-L-rhamnosyl-(1-&gt;4)-alpha-D-galacturonosyl](n+1) + UDP + H(+). The protein operates within glycan metabolism; pectin biosynthesis. Glycosyltransferase involved in the formation of rhamnogalacturonan I (RG-I) oligosaccharides in the seed coat mucilage, which is a specialized cell wall with abundant RG-I. Transfers the rhamnose residue from UDP-beta-L-rhamnose to RG-I oligosaccharides. This Arabidopsis thaliana (Mouse-ear cress) protein is Rhamnogalacturonan I rhamnosyltransferase 4.